The sequence spans 199 residues: N-(5'-phosphoribosyl)anthranilate isomerase (199 aa).

The protein belongs to the TrpF family.

The enzyme catalyses N-(5-phospho-beta-D-ribosyl)anthranilate = 1-(2-carboxyphenylamino)-1-deoxy-D-ribulose 5-phosphate. Its pathway is amino-acid biosynthesis; L-tryptophan biosynthesis; L-tryptophan from chorismate: step 3/5. The polypeptide is N-(5'-phosphoribosyl)anthranilate isomerase (Streptococcus pneumoniae (strain ATCC 700669 / Spain 23F-1)).